Consider the following 204-residue polypeptide: Large ribosomal subunit protein uL4 (204 aa).

A disordered region spans residues 49–90 (KVKGMGEVSGTTKKPYRQKGTGSARQGSLRAPQYRTGGAVHG).

This sequence belongs to the universal ribosomal protein uL4 family. Part of the 50S ribosomal subunit.

Its function is as follows. One of the primary rRNA binding proteins, this protein initially binds near the 5'-end of the 23S rRNA. It is important during the early stages of 50S assembly. It makes multiple contacts with different domains of the 23S rRNA in the assembled 50S subunit and ribosome. In terms of biological role, forms part of the polypeptide exit tunnel. In Gluconacetobacter diazotrophicus (strain ATCC 49037 / DSM 5601 / CCUG 37298 / CIP 103539 / LMG 7603 / PAl5), this protein is Large ribosomal subunit protein uL4.